Consider the following 223-residue polypeptide: Ribonuclease 3 (223 aa).

The 123-residue stretch at 3-125 folds into the RNase III domain; that stretch reads LERLQKKLGY…IIAAIYLDAG (123 aa). Mg(2+) is bound at residue glutamate 38. The active site involves aspartate 42. 2 residues coordinate Mg(2+): aspartate 111 and glutamate 114. The active site involves glutamate 114. Positions 152-222 constitute a DRBM domain; sequence DPKTRLQEFL…AEQVLAKLTT (71 aa).

Belongs to the ribonuclease III family. Homodimer. It depends on Mg(2+) as a cofactor.

Its subcellular location is the cytoplasm. It catalyses the reaction Endonucleolytic cleavage to 5'-phosphomonoester.. Digests double-stranded RNA. Involved in the processing of primary rRNA transcript to yield the immediate precursors to the large and small rRNAs (23S and 16S). Processes some mRNAs, and tRNAs when they are encoded in the rRNA operon. Processes pre-crRNA and tracrRNA of type II CRISPR loci if present in the organism. The sequence is that of Ribonuclease 3 from Actinobacillus pleuropneumoniae serotype 3 (strain JL03).